A 94-amino-acid polypeptide reads, in one-letter code: C-X-C motif chemokine 11-1 (94 aa).

A signal peptide spans 1 to 19; sequence MKTVTALLLVSLAVVAIEG. Cystine bridges form between cysteine 27–cysteine 54 and cysteine 29–cysteine 71.

Belongs to the intercrine alpha (chemokine CxC) family.

Its subcellular location is the secreted. Functionally, ligand for cxcr3.2. Chemotactic for macrophages. The polypeptide is C-X-C motif chemokine 11-1 (cxcl11.1) (Danio rerio (Zebrafish)).